The sequence spans 239 residues: MIAFSLLCLAAVLRQSFGNVDFNSESTRRKKKQKEIVDLHNSLRRRVSPTASNMLKMEWYPEAASNAERWANTCSLNHSPDNLRVLEGIQCGESIYMSSNARTWTEIIHLWHDEYKNFVYGVGANPPGSVTGHYTQIVWYQTYRAGCAVSYCPSSAWSYFYVCQYCPSGNFQGKTATPYKLGPPCGDCPSACDNGLCTNPCTIYNKLTNCDSLLKQGSCQDDWIKSNCPASCFCRNKII.

An N-terminal signal peptide occupies residues 1 to 18 (MIAFSLLCLAAVLRQSFG). An SCP domain is found at 37–165 (VDLHNSLRRR…AWSYFYVCQY (129 aa)). Cystine bridges form between Cys74-Cys152, Cys91-Cys166, Cys147-Cys163, Cys185-Cys192, Cys188-Cys197, Cys201-Cys234, Cys210-Cys228, and Cys219-Cys232. Residues 201 to 234 (CTIYNKLTNCDSLLKQGSCQDDWIKSNCPASCFC) form the ShKT domain.

It belongs to the CRISP family. In terms of tissue distribution, expressed by the venom gland.

The protein localises to the secreted. Its function is as follows. Inhibits calcium-activated potassium channels (KCa), voltage-gated potassium channel (Kv), and the calcium release channel/ryanodine receptor (RyR). The protein is Cysteine-rich venom protein kaouthin-1 of Naja kaouthia (Monocled cobra).